A 474-amino-acid polypeptide reads, in one-letter code: tRNA-2-methylthio-N(6)-dimethylallyladenosine synthase (474 aa).

The region spanning 3–120 (KKLLIKTWGC…LPEMIKQSQS (118 aa)) is the MTTase N-terminal domain. [4Fe-4S] cluster-binding residues include Cys-12, Cys-49, Cys-83, Cys-157, Cys-161, and Cys-164. The Radical SAM core domain maps to 143–375 (RAEGATAFVS…QQQINAQAMR (233 aa)). The TRAM domain occupies 378-441 (RLMLGTEQRV…ANSLRGEIVR (64 aa)).

The protein belongs to the methylthiotransferase family. MiaB subfamily. In terms of assembly, monomer. [4Fe-4S] cluster is required as a cofactor.

It localises to the cytoplasm. The catalysed reaction is N(6)-dimethylallyladenosine(37) in tRNA + (sulfur carrier)-SH + AH2 + 2 S-adenosyl-L-methionine = 2-methylsulfanyl-N(6)-dimethylallyladenosine(37) in tRNA + (sulfur carrier)-H + 5'-deoxyadenosine + L-methionine + A + S-adenosyl-L-homocysteine + 2 H(+). Functionally, catalyzes the methylthiolation of N6-(dimethylallyl)adenosine (i(6)A), leading to the formation of 2-methylthio-N6-(dimethylallyl)adenosine (ms(2)i(6)A) at position 37 in tRNAs that read codons beginning with uridine. The protein is tRNA-2-methylthio-N(6)-dimethylallyladenosine synthase of Vibrio vulnificus (strain YJ016).